A 291-amino-acid polypeptide reads, in one-letter code: RPE-retinal G protein-coupled receptor (291 aa).

Topologically, residues M1 to E15 are extracellular. Residues V16–L36 form a helical membrane-spanning segment. The Cytoplasmic portion of the chain corresponds to T37–N52. The chain crosses the membrane as a helical span at residues L53–A73. At V74–H91 the chain is on the extracellular side. An intrachain disulfide couples C88 to C162. The helical transmembrane segment at G92–G112 threads the bilayer. The Cytoplasmic portion of the chain corresponds to R113 to P130. A helical transmembrane segment spans residues L131–G151. Residues H152 to S175 are Extracellular-facing. Residues F176–Y196 form a helical membrane-spanning segment. Topologically, residues R197–M219 are cytoplasmic. Residues L220–S240 traverse the membrane as a helical segment. Residues F241–Q247 lie on the Extracellular side of the membrane. The helical transmembrane segment at M248–H268 threads the bilayer. K255 carries the N6-(retinylidene)lysine modification. At R269–Q291 the chain is on the cytoplasmic side.

It belongs to the G-protein coupled receptor 1 family. Opsin subfamily. Post-translationally, covalently binds all-trans- and 11-cis-retinal.

The protein localises to the membrane. Functionally, receptor for all-trans- and 11-cis-retinal. Binds preferentially to the former and may catalyze the isomerization of the chromophore by a retinochrome-like mechanism. The chain is RPE-retinal G protein-coupled receptor (Rgr) from Mus musculus (Mouse).